A 137-amino-acid polypeptide reads, in one-letter code: Nucleoside diphosphate kinase (137 aa).

Residues Lys9, Phe57, Arg85, Thr91, Arg102, and Asn112 each contribute to the ATP site. His115 serves as the catalytic Pros-phosphohistidine intermediate.

The protein belongs to the NDK family. As to quaternary structure, homotetramer. Mg(2+) is required as a cofactor.

The protein resides in the cytoplasm. It catalyses the reaction a 2'-deoxyribonucleoside 5'-diphosphate + ATP = a 2'-deoxyribonucleoside 5'-triphosphate + ADP. It carries out the reaction a ribonucleoside 5'-diphosphate + ATP = a ribonucleoside 5'-triphosphate + ADP. Major role in the synthesis of nucleoside triphosphates other than ATP. The ATP gamma phosphate is transferred to the NDP beta phosphate via a ping-pong mechanism, using a phosphorylated active-site intermediate. The protein is Nucleoside diphosphate kinase of Thermus thermophilus (strain ATCC BAA-163 / DSM 7039 / HB27).